The sequence spans 260 residues: Flap endonuclease Xni (260 aa).

Aspartate 105 lines the Mg(2+) pocket. Positions 164–259 (NQFLDLMALA…VNGPANTQQA (96 aa)) constitute a 5'-3' exonuclease domain. 5 residues coordinate K(+): leucine 172, alanine 173, proline 181, isoleucine 183, and isoleucine 186. Residues 185–190 (GIGPKS) are interaction with DNA.

The protein belongs to the Xni family. The cofactor is Mg(2+). K(+) serves as cofactor.

Functionally, has flap endonuclease activity. During DNA replication, flap endonucleases cleave the 5'-overhanging flap structure that is generated by displacement synthesis when DNA polymerase encounters the 5'-end of a downstream Okazaki fragment. In Shewanella sp. (strain MR-4), this protein is Flap endonuclease Xni.